A 736-amino-acid polypeptide reads, in one-letter code: Phosphoribosylformylglycinamidine synthase subunit PurL (736 aa).

The active site involves His-50. Residues Tyr-53 and Lys-92 each contribute to the ATP site. Glu-94 provides a ligand contact to Mg(2+). Residues 95–98 (SHNH) and Arg-117 contribute to the substrate site. His-96 acts as the Proton acceptor in catalysis. Asp-118 contacts Mg(2+). Residue Gln-241 participates in substrate binding. Asp-269 provides a ligand contact to Mg(2+). 313–315 (ESQ) serves as a coordination point for substrate. Asp-495 and Gly-532 together coordinate ATP. Asn-533 lines the Mg(2+) pocket. Ser-535 contacts substrate.

Belongs to the FGAMS family. In terms of assembly, monomer. Part of the FGAM synthase complex composed of 1 PurL, 1 PurQ and 2 PurS subunits.

The protein resides in the cytoplasm. It catalyses the reaction N(2)-formyl-N(1)-(5-phospho-beta-D-ribosyl)glycinamide + L-glutamine + ATP + H2O = 2-formamido-N(1)-(5-O-phospho-beta-D-ribosyl)acetamidine + L-glutamate + ADP + phosphate + H(+). Its pathway is purine metabolism; IMP biosynthesis via de novo pathway; 5-amino-1-(5-phospho-D-ribosyl)imidazole from N(2)-formyl-N(1)-(5-phospho-D-ribosyl)glycinamide: step 1/2. Its function is as follows. Part of the phosphoribosylformylglycinamidine synthase complex involved in the purines biosynthetic pathway. Catalyzes the ATP-dependent conversion of formylglycinamide ribonucleotide (FGAR) and glutamine to yield formylglycinamidine ribonucleotide (FGAM) and glutamate. The FGAM synthase complex is composed of three subunits. PurQ produces an ammonia molecule by converting glutamine to glutamate. PurL transfers the ammonia molecule to FGAR to form FGAM in an ATP-dependent manner. PurS interacts with PurQ and PurL and is thought to assist in the transfer of the ammonia molecule from PurQ to PurL. In Bartonella tribocorum (strain CIP 105476 / IBS 506), this protein is Phosphoribosylformylglycinamidine synthase subunit PurL.